A 425-amino-acid chain; its full sequence is Ribulose bisphosphate carboxylase (425 aa).

The active-site Proton acceptor is lysine 153. Lysine 155 contacts substrate. Lysine 179, aspartate 181, and glutamate 182 together coordinate Mg(2+). Lysine 179 is modified (N6-carboxylysine). Histidine 269 acts as the Proton acceptor in catalysis. Substrate contacts are provided by residues arginine 270, histidine 302, serine 353–glycine 355, and glutamine 375–glycine 378.

It belongs to the RuBisCO large chain family. Type III subfamily. As to quaternary structure, homodimer. In contrast to form I RuBisCO, the form III RuBisCO is composed solely of large subunits. Requires Mg(2+) as cofactor.

The enzyme catalyses 2 (2R)-3-phosphoglycerate + 2 H(+) = D-ribulose 1,5-bisphosphate + CO2 + H2O. The catalysed reaction is D-ribulose 1,5-bisphosphate + O2 = 2-phosphoglycolate + (2R)-3-phosphoglycerate + 2 H(+). Reversibly inhibited by O(2). Its function is as follows. Catalyzes the addition of molecular CO(2) and H(2)O to ribulose 1,5-bisphosphate (RuBP), generating two molecules of 3-phosphoglycerate (3-PGA). Functions in an archaeal AMP degradation pathway, together with AMP phosphorylase and R15P isomerase. The sequence is that of Ribulose bisphosphate carboxylase from Methanocaldococcus jannaschii (strain ATCC 43067 / DSM 2661 / JAL-1 / JCM 10045 / NBRC 100440) (Methanococcus jannaschii).